The sequence spans 317 residues: Methionyl-tRNA formyltransferase (317 aa).

111–114 (SLLP) is a (6S)-5,6,7,8-tetrahydrofolate binding site.

This sequence belongs to the Fmt family.

It carries out the reaction L-methionyl-tRNA(fMet) + (6R)-10-formyltetrahydrofolate = N-formyl-L-methionyl-tRNA(fMet) + (6S)-5,6,7,8-tetrahydrofolate + H(+). Attaches a formyl group to the free amino group of methionyl-tRNA(fMet). The formyl group appears to play a dual role in the initiator identity of N-formylmethionyl-tRNA by promoting its recognition by IF2 and preventing the misappropriation of this tRNA by the elongation apparatus. The chain is Methionyl-tRNA formyltransferase from Chlorobium phaeobacteroides (strain BS1).